The chain runs to 44 residues: Benzaldehyde dehydrogenase [NAD(+)] II (44 aa).

Belongs to the aldehyde dehydrogenase family.

It catalyses the reaction benzaldehyde + NAD(+) + H2O = benzoate + NADH + 2 H(+). This is Benzaldehyde dehydrogenase [NAD(+)] II from Acinetobacter guillouiae (Acinetobacter genomosp. 11).